Here is a 439-residue protein sequence, read N- to C-terminus: Ribosomal protein uS12 methylthiotransferase RimO (439 aa).

The region spanning 3–118 (KKFYITTLGC…AGKILREKFP (116 aa)) is the MTTase N-terminal domain. Residues C12, C48, C81, C157, C161, and C164 each coordinate [4Fe-4S] cluster. The Radical SAM core domain maps to 143–370 (NYSKPYAYVK…RDVHLAILEE (228 aa)). The TRAM domain maps to 373–438 (ESRIGQTYDA…EYDMNGTWIS (66 aa)).

Belongs to the methylthiotransferase family. RimO subfamily. It depends on [4Fe-4S] cluster as a cofactor.

It is found in the cytoplasm. The enzyme catalyses L-aspartate(89)-[ribosomal protein uS12]-hydrogen + (sulfur carrier)-SH + AH2 + 2 S-adenosyl-L-methionine = 3-methylsulfanyl-L-aspartate(89)-[ribosomal protein uS12]-hydrogen + (sulfur carrier)-H + 5'-deoxyadenosine + L-methionine + A + S-adenosyl-L-homocysteine + 2 H(+). Functionally, catalyzes the methylthiolation of an aspartic acid residue of ribosomal protein uS12. This Leptospira borgpetersenii serovar Hardjo-bovis (strain L550) protein is Ribosomal protein uS12 methylthiotransferase RimO.